A 183-amino-acid chain; its full sequence is MAMYTSESERDWRRVIHDSHGLWCDCGDWREHLYCVYDSHFQRRPTTRAERRAANWRRQMRRLHRLWCFCQDWKCHALYAEWDGKESDDESSASSSGEAPEQQVPAWKTVRAFSRAYHHRINRGLRGTPPPRNLPGYEHASEGWRFCNRRERREDDLRTRAEPDRVVFQLGGVPPRRHRETYV.

The protein belongs to the herpesviridae US1 family.

This is Protein US32 (US32) from Homo sapiens (Human).